Consider the following 64-residue polypeptide: Beta-defensin 5 (64 aa).

The N-terminal stretch at methionine 1 to threonine 22 is a signal peptide. Glutamine 23 carries the pyrrolidone carboxylic acid modification. Cystine bridges form between cysteine 31–cysteine 60, cysteine 38–cysteine 53, and cysteine 43–cysteine 61.

It belongs to the beta-defensin family. Neutrophilic granules. Alveolar macrophages.

The protein resides in the secreted. In terms of biological role, has bactericidal activity. Active against E.coli ML35 but not against S.aureus 502A. This is Beta-defensin 5 (DEFB5) from Bos taurus (Bovine).